Here is a 442-residue protein sequence, read N- to C-terminus: MDPNQHNPPAGHQIVHVRGDSETDLEALFNAVMNPKNTIVPPSVPMRLRKLPDSFFTPPEPKSHSRQASTDAGTAGTVTPHHVRAHSSPASLQLGAVSPGALTSMGPANAPPQHLRQSSYEIPDDMPLPPGWEMAKTPSGQRYFLNHNDQTTTWQDPRKALLQMNQAAPASPVPVQQQNIMNPASGPLPDGWEQAITSEGEIYYINHKNKTTSWLDPRLDPRFAMNQQRISQSAPVKQGSQLPSSPQSGVMSGNNPIRLQQIHIEKERLRIKQELLRQRPQELALRNQLPTSMEQDGGTQNPVSSPGMGQDARNMTTNSSDPFLNSGTYHSRDESTDSGLSMSSYSVPRTPDDFLNSVDEMETGDTLGPGSMATQPSRFPDYLDAIPGTDVDLGTLEGESMAVEGEELMPSLQEALSSDILNDMESVLAATKIDKENFLTWL.

Ser21, Ser69, and Ser87 each carry phosphoserine; by LATS1 and LATS2. Disordered stretches follow at residues 51 to 89 (LPDS…HSSP) and 97 to 116 (VSPG…QHLR). Ser119 carries the phosphoserine; by LATS1 and LATS2 modification. 2 WW domains span residues 126 to 159 (MPLP…DPRK) and 186 to 219 (GPLP…DPRL). The interval 230–254 (ISQSAPVKQGSQLPSSPQSGVMSGN) is disordered. Over residues 238 to 249 (QGSQLPSSPQSG) the composition is skewed to low complexity. Positions 247-442 (QSGVMSGNNP…IDKENFLTWL (196 aa)) are transactivation domain. The stretch at 258–279 (RLQQIHIEKERLRIKQELLRQR) forms a coiled coil. A disordered region spans residues 286–374 (RNQLPTSMEQ…DTLGPGSMAT (89 aa)). Polar residues-rich tracts occupy residues 288–304 (QLPT…NPVS), 313–329 (RNMT…SGTY), and 337–347 (DSGLSMSSYSV).

Belongs to the YAP1 family. Post-translationally, phosphorylated by lats1 and lats2; leading to cytoplasmic translocation and inactivation. Expressed in the notochord, brain, eyes, branchial arches and pectoral fins.

Its subcellular location is the cytoplasm. The protein localises to the nucleus. The protein resides in the cell junction. It is found in the tight junction. It localises to the cell membrane. Functionally, transcriptional regulator which can act both as a coactivator and a corepressor and is the critical downstream regulatory target in the Hippo signaling pathway that plays a pivotal role in organ size control and tumor suppression by restricting proliferation and promoting apoptosis. Required for expansion of the neural plate and neural plate border zone progenitor pools. Acts as a direct regulator of pax3 expression via interaction with tead1. Plays a key role in tissue tension and 3D tissue shape by regulating cortical actomyosin network formation. The chain is Transcriptional coactivator YAP1 (yap1) from Danio rerio (Zebrafish).